A 161-amino-acid polypeptide reads, in one-letter code: Regulator of ribonuclease activity A (161 aa).

It belongs to the RraA family. In terms of assembly, homotrimer. Binds to both RNA-binding sites in the C-terminal region of Rne and to RhlB.

The protein resides in the cytoplasm. In terms of biological role, globally modulates RNA abundance by binding to RNase E (Rne) and regulating its endonucleolytic activity. Can modulate Rne action in a substrate-dependent manner by altering the composition of the degradosome. Modulates RNA-binding and helicase activities of the degradosome. The polypeptide is Regulator of ribonuclease activity A (Idiomarina loihiensis (strain ATCC BAA-735 / DSM 15497 / L2-TR)).